The sequence spans 209 residues: MADSKEIKRVLLSPLFDNNPIALQILGVCSALAVTTKLETALVMTLAVTLVTAFSSFFISLIRNHIPNSVRIIVQMVIIASLVIVVDQVLRAYAYEISKQLSVFVGLIITNCIVMGRAEAYAMKSPPIESFMDGIGNGLGYGVILVLVGFVRELVGSGKLFGVTVLETVQNGGWYLPNGLFLLAPSAFFIIGLLIWGLRTLKPAQIEKE.

Transmembrane regions (helical) follow at residues 42–62 (LVMT…ISLI), 66–86 (IPNS…VIVV), 103–123 (VFVG…AYAM), 131–151 (FMDG…VGFV), and 178–198 (NGLF…IWGL).

It belongs to the NqrDE/RnfAE family. As to quaternary structure, composed of six subunits; NqrA, NqrB, NqrC, NqrD, NqrE and NqrF.

It is found in the cell inner membrane. It carries out the reaction a ubiquinone + n Na(+)(in) + NADH + H(+) = a ubiquinol + n Na(+)(out) + NAD(+). In terms of biological role, NQR complex catalyzes the reduction of ubiquinone-1 to ubiquinol by two successive reactions, coupled with the transport of Na(+) ions from the cytoplasm to the periplasm. NqrA to NqrE are probably involved in the second step, the conversion of ubisemiquinone to ubiquinol. In Yersinia pseudotuberculosis serotype O:1b (strain IP 31758), this protein is Na(+)-translocating NADH-quinone reductase subunit D.